Here is a 1010-residue protein sequence, read N- to C-terminus: Phosphatidylserine decarboxylase proenzyme 2 (1010 aa).

C2 domains follow at residues 1 to 114 (MSQA…SSWE) and 247 to 370 (DFES…DKPC). D342, S345, and D348 together coordinate Ca(2+). The EF-hand domain occupies 458–493 (LRRQLWMHLLQGNDTQMKGTLDLIELNYFVDCLGSN). Active-site charge relay system; for autoendoproteolytic cleavage activity residues include D734, H793, and S880. S880 (schiff-base intermediate with substrate; via pyruvic acid; for decarboxylase activity) is an active-site residue. Pyruvic acid (Ser); by autocatalysis is present on S880.

The protein belongs to the phosphatidylserine decarboxylase family. PSD-B subfamily. Eukaryotic type II sub-subfamily. As to quaternary structure, heterodimer of a large membrane-associated beta subunit and a small pyruvoyl-containing alpha subunit. Interacts with pstB2. This interaction may be a means to structurally tether the donor membrane (ER) harboring PstB2 to acceptor membranes (Golgi/endosomes) harboring PSD2 during PtdSer transport to the site of PtdEtn synthesis. It depends on pyruvate as a cofactor. Ca(2+) is required as a cofactor. Is synthesized initially as an inactive proenzyme. Formation of the active enzyme involves a self-maturation process in which the active site pyruvoyl group is generated from an internal serine residue via an autocatalytic post-translational modification. Two non-identical subunits are generated from the proenzyme in this reaction, and the pyruvate is formed at the N-terminus of the alpha chain, which is derived from the carboxyl end of the proenzyme. The autoendoproteolytic cleavage occurs by a canonical serine protease mechanism, in which the side chain hydroxyl group of the serine supplies its oxygen atom to form the C-terminus of the beta chain, while the remainder of the serine residue undergoes an oxidative deamination to produce ammonia and the pyruvoyl prosthetic group on the alpha chain. During this reaction, the Ser that is part of the protease active site of the proenzyme becomes the pyruvoyl prosthetic group, which constitutes an essential element of the active site of the mature decarboxylase.

The protein resides in the golgi apparatus membrane. It is found in the endosome membrane. It catalyses the reaction a 1,2-diacyl-sn-glycero-3-phospho-L-serine + H(+) = a 1,2-diacyl-sn-glycero-3-phosphoethanolamine + CO2. The protein operates within phospholipid metabolism; phosphatidylethanolamine biosynthesis; phosphatidylethanolamine from CDP-diacylglycerol: step 2/2. Its function is as follows. Catalyzes the formation of phosphatidylethanolamine (PtdEtn) from phosphatidylserine (PtdSer). Plays a central role in phospholipid metabolism and in the interorganelle trafficking of phosphatidylserine. This Komagataella phaffii (strain GS115 / ATCC 20864) (Yeast) protein is Phosphatidylserine decarboxylase proenzyme 2.